The following is a 116-amino-acid chain: MEKMVRDIGLRIQPPAEKCDDPKCPWHGHLKIHGRVFEGIVISDKPRKTVTVERQYYHYLKKYERYELRRSRIHAHNPPCINAKVGDRVLIAETRPLSKTKHFVVVAVLERAEERR.

Belongs to the universal ribosomal protein uS17 family. Part of the 30S ribosomal subunit.

Functionally, one of the primary rRNA binding proteins, it binds specifically to the 5'-end of 16S ribosomal RNA. This is Small ribosomal subunit protein uS17 from Pyrococcus horikoshii (strain ATCC 700860 / DSM 12428 / JCM 9974 / NBRC 100139 / OT-3).